A 353-amino-acid chain; its full sequence is uncharacterized protein (353 aa).

Residues Met1–Ala23 form the signal peptide.

It to E.coli YqiI.

Functionally, may be involved in a fimbrial system chaperoned by YbgP and exported by YbgQ. This is an uncharacterized protein from Escherichia coli (strain K12).